We begin with the raw amino-acid sequence, 308 residues long: Large ribosomal subunit protein mL38 (308 aa).

The transit peptide at methionine 1–alanine 17 directs the protein to the mitochondrion.

This sequence belongs to the phosphatidylethanolamine-binding protein family. Mitochondrion-specific ribosomal protein mL38 subfamily. Component of the mitochondrial large ribosomal subunit (mt-LSU). Mature yeast 74S mitochondrial ribosomes consist of a small (37S) and a large (54S) subunit. The 37S small subunit contains a 15S ribosomal RNA (15S mt-rRNA) and at least 32 different proteins. The 54S large subunit contains a 21S rRNA (21S mt-rRNA) and at least 45 different proteins.

The protein localises to the mitochondrion. In terms of biological role, component of the mitochondrial ribosome (mitoribosome), a dedicated translation machinery responsible for the synthesis of mitochondrial genome-encoded proteins, including at least some of the essential transmembrane subunits of the mitochondrial respiratory chain. The mitoribosomes are attached to the mitochondrial inner membrane and translation products are cotranslationally integrated into the membrane. In Schizosaccharomyces pombe (strain 972 / ATCC 24843) (Fission yeast), this protein is Large ribosomal subunit protein mL38 (mrpl35).